The chain runs to 131 residues: Hyastatin (131 aa).

A signal peptide spans 1–16 (MRVLLILVSLAALAHA). 3 disulfide bridges follow: Cys-103–Cys-117, Cys-107–Cys-124, and Cys-118–Cys-125. Lys-130 is subject to Lysine amide.

Strongly expressed in hemocytes, with weaker expression in gills and epidermis. Expressed at low levels in hepatopancreas.

Its subcellular location is the cytoplasmic granule. Antimicrobial peptide. Has strong antibacterial activity against the Gram-positive bacterium C.glutamicum (MIC=0.4 uM) and the Gram-negative bacterium E.coli (MIC=12.5 uM). Has weak antibacterial activity against the Gram-positive bacterium S.aureus (MIC&gt;50 uM) and the Gram-negative bacterium P.aeruginosa (MIC&gt;50 uM). Has antifungal activity against S.cerevisiae (MIC=12.5) and C.albicans (MIC=6.3 uM). Has weak antifungal activity against the mold B.cinerea. Presents chitin-binding activity. The chain is Hyastatin from Hyas araneus (Atlantic lyre crab).